Here is a 199-residue protein sequence, read N- to C-terminus: 5'-deoxynucleotidase YfbR (199 aa).

Substrate is bound by residues 18-19 (RW) and H33. An HD domain is found at 30 to 142 (VSEHSLQVAM…VKQADALCAY (113 aa)). Residues H33, H68, and D69 each coordinate a divalent metal cation. Residues D69, 77–80 (DLPT), and D137 contribute to the substrate site. D137 lines the a divalent metal cation pocket.

This sequence belongs to the 5DNU family. In terms of assembly, homodimer. Requires a divalent metal cation as cofactor.

It localises to the cytoplasm. The catalysed reaction is a 2'-deoxyribonucleoside 5'-phosphate + H2O = a 2'-deoxyribonucleoside + phosphate. Catalyzes the strictly specific dephosphorylation of 2'-deoxyribonucleoside 5'-monophosphates. This chain is 5'-deoxynucleotidase YfbR, found in Shigella boydii serotype 18 (strain CDC 3083-94 / BS512).